We begin with the raw amino-acid sequence, 142 residues long: Nucleoside diphosphate kinase (142 aa).

ATP-binding residues include lysine 11, phenylalanine 59, arginine 87, threonine 93, arginine 104, and asparagine 114. Histidine 117 serves as the catalytic Pros-phosphohistidine intermediate.

Belongs to the NDK family. Homotetramer. Mg(2+) is required as a cofactor.

It localises to the cytoplasm. The catalysed reaction is dZDP + ATP = dZTP + ADP. The enzyme catalyses a 2'-deoxyribonucleoside 5'-diphosphate + ATP = a 2'-deoxyribonucleoside 5'-triphosphate + ADP. It catalyses the reaction a ribonucleoside 5'-diphosphate + ATP = a ribonucleoside 5'-triphosphate + ADP. It functions in the pathway purine metabolism. Its function is as follows. Major role in the synthesis of nucleoside triphosphates other than ATP. The ATP gamma phosphate is transferred to the NDP beta phosphate via a ping-pong mechanism, using a phosphorylated active-site intermediate. (Microbial infection) Catalyzes the phosphorylation of dZDP to dZTP, when the bacterium is infected by a phage that produces the substrate for the synthesis of dZTP (2- amino-2'-deoxyadenosine 5'-triphosphate), which is then used by the phage as a DNA polymerase substrate. This Vibrio cholerae serotype O1 (strain ATCC 39315 / El Tor Inaba N16961) protein is Nucleoside diphosphate kinase.